Consider the following 348-residue polypeptide: Putative [LysW]-L-2-aminoadipate/[LysW]-L-glutamate phosphate reductase (348 aa).

An NADP(+)-binding site is contributed by 9-12 (SGYV). C149 is an active-site residue. Residue N315 coordinates NADP(+).

The protein belongs to the NAGSA dehydrogenase family. Type 1 subfamily. LysY sub-subfamily.

It localises to the cytoplasm. The catalysed reaction is [amino-group carrier protein]-C-terminal-N-(1-carboxy-5-oxopentan-1-yl)-L-glutamine + phosphate + NADP(+) = [amino-group carrier protein]-C-terminal-N-(1-carboxy-5-phosphooxy-5-oxopentan-1-yl)-L-glutamine + NADPH + H(+). It catalyses the reaction [amino-group carrier protein]-C-terminal-gamma-(L-glutamyl-5-semialdehyde)-L-glutamate + phosphate + NADP(+) = [amino-group carrier protein]-C-terminal-gamma-(5-phospho-L-glutamyl)-L-glutamate + NADPH + H(+). It participates in amino-acid biosynthesis; L-lysine biosynthesis via AAA pathway; L-lysine from L-alpha-aminoadipate (Thermus route): step 3/5. The protein operates within amino-acid biosynthesis; L-arginine biosynthesis. Involved in both the arginine and lysine biosynthetic pathways. This chain is Putative [LysW]-L-2-aminoadipate/[LysW]-L-glutamate phosphate reductase, found in Nitrosopumilus maritimus (strain SCM1).